Reading from the N-terminus, the 131-residue chain is Translation initiation factor 5A (131 aa).

The residue at position 37 (lysine 37) is a Hypusine.

It belongs to the eIF-5A family.

The protein localises to the cytoplasm. Its function is as follows. Functions by promoting the formation of the first peptide bond. In Methanococcus vannielii (strain ATCC 35089 / DSM 1224 / JCM 13029 / OCM 148 / SB), this protein is Translation initiation factor 5A (eIF5A).